The primary structure comprises 1034 residues: FACT complex subunit spt-16 (1034 aa).

3 stretches are compositionally biased toward basic and acidic residues: residues 433 to 448, 463 to 481, and 493 to 503; these read EEQENRETERDTDQKK, TRNKTTNEDLRKERQKELG, and SKQDGGTDEKK. The interval 433 to 511 is disordered; sequence EEQENRETER…KKVKKSNVSY (79 aa). The stretch at 617-642 forms a coiled coil; the sequence is LSTAFRQIKEMQKRFRTEEAEEREKD. Acidic residues-rich tracts occupy residues 926–950 and 959–983; these read AESEGEDAGDDSDESDAYDPEEADA and SDEDESEGEETESDDDEEGSLDSDE. Residues 926-1034 form a disordered region; the sequence is AESEGEDAGD…KAGPSHKRRK (109 aa). Basic and acidic residues predominate over residues 984–1020; the sequence is SEGKDWSDLEEEAAKADKRREVEDGGRDRDRDRDRKR. Basic residues predominate over residues 1021–1034; the sequence is PSSSKAGPSHKRRK.

This sequence belongs to the peptidase M24 family. SPT16 subfamily. Component of the FACT complex, a stable heterodimer of spt-16 and hmg-3 or hmg-4.

It localises to the nucleus. The protein localises to the chromosome. In terms of biological role, component of the FACT complex, a general chromatin factor that acts to reorganize nucleosomes. The FACT complex is involved in multiple processes that require DNA as a template such as mRNA elongation, DNA replication and DNA repair. During transcription elongation the FACT complex acts as a histone chaperone that both destabilizes and restores nucleosomal structure. It facilitates the passage of RNA polymerase II and transcription by promoting the dissociation of one histone H2A-H2B dimer from the nucleosome, then subsequently promotes the reestablishment of the nucleosome following the passage of RNA polymerase II. This Caenorhabditis briggsae protein is FACT complex subunit spt-16 (spt-16).